The following is a 361-amino-acid chain: Phosphoserine aminotransferase (361 aa).

Residue arginine 42 participates in L-glutamate binding. Residues 76–77 (AR), tryptophan 102, threonine 153, aspartate 173, and glutamine 196 contribute to the pyridoxal 5'-phosphate site. Lysine 197 carries the N6-(pyridoxal phosphate)lysine modification. Position 238-239 (238-239 (NT)) interacts with pyridoxal 5'-phosphate.

It belongs to the class-V pyridoxal-phosphate-dependent aminotransferase family. SerC subfamily. Homodimer. It depends on pyridoxal 5'-phosphate as a cofactor.

It localises to the cytoplasm. The enzyme catalyses O-phospho-L-serine + 2-oxoglutarate = 3-phosphooxypyruvate + L-glutamate. The catalysed reaction is 4-(phosphooxy)-L-threonine + 2-oxoglutarate = (R)-3-hydroxy-2-oxo-4-phosphooxybutanoate + L-glutamate. It functions in the pathway amino-acid biosynthesis; L-serine biosynthesis; L-serine from 3-phospho-D-glycerate: step 2/3. The protein operates within cofactor biosynthesis; pyridoxine 5'-phosphate biosynthesis; pyridoxine 5'-phosphate from D-erythrose 4-phosphate: step 3/5. In terms of biological role, catalyzes the reversible conversion of 3-phosphohydroxypyruvate to phosphoserine and of 3-hydroxy-2-oxo-4-phosphonooxybutanoate to phosphohydroxythreonine. This is Phosphoserine aminotransferase from Buchnera aphidicola subsp. Acyrthosiphon pisum (strain 5A).